A 270-amino-acid polypeptide reads, in one-letter code: NAD kinase (270 aa).

The active-site Proton acceptor is Asp-45. NAD(+) is bound by residues 45–46 (DG), 121–122 (NE), Arg-147, Asp-149, 160–165 (TAYNKS), and Ala-184.

This sequence belongs to the NAD kinase family. The cofactor is a divalent metal cation.

Its subcellular location is the cytoplasm. It carries out the reaction NAD(+) + ATP = ADP + NADP(+) + H(+). In terms of biological role, involved in the regulation of the intracellular balance of NAD and NADP, and is a key enzyme in the biosynthesis of NADP. Catalyzes specifically the phosphorylation on 2'-hydroxyl of the adenosine moiety of NAD to yield NADP. This chain is NAD kinase, found in Limosilactobacillus reuteri subsp. reuteri (strain JCM 1112) (Lactobacillus reuteri).